The following is an 89-amino-acid chain: Mitochondrial import inner membrane translocase subunit tim10 (89 aa).

A Twin CX3C motif motif is present at residues 39 to 64 (CHKKCISPKYYEADLTKGESVCIDRC). Disulfide bonds link C39-C64 and C43-C60.

The protein belongs to the small Tim family. As to quaternary structure, heterohexamer; composed of 3 copies of TIM9 and 3 copies of TIM10, named soluble 70 kDa complex. Associates directly with the TIM22 complex, whose core is composed of TIM22 and TIM54. Interacts with the transmembrane regions of multi-pass transmembrane proteins in transit.

The protein localises to the mitochondrion inner membrane. Functionally, mitochondrial intermembrane chaperone that participates in the import and insertion of multi-pass transmembrane proteins into the mitochondrial inner membrane. Also required for the transfer of beta-barrel precursors from the TOM complex to the sorting and assembly machinery (SAM complex) of the outer membrane. Acts as a chaperone-like protein that protects the hydrophobic precursors from aggregation and guide them through the mitochondrial intermembrane space. This is Mitochondrial import inner membrane translocase subunit tim10 (tim10) from Schizosaccharomyces pombe (strain 972 / ATCC 24843) (Fission yeast).